The primary structure comprises 331 residues: NADH-quinone oxidoreductase subunit H (331 aa).

8 helical membrane passes run 7-27, 81-101, 114-134, 154-174, 187-207, 238-258, 271-291, and 310-330; these read ALVT…AVVI, MIFT…FAIV, IGIL…LFAG, ISYE…VGSF, VWFI…GVAV, FFVG…TLFF, WLSF…FILI, and VCLP…LAAA.

Belongs to the complex I subunit 1 family. NDH-1 is composed of 13 different subunits. Subunits NuoA, H, J, K, L, M, N constitute the membrane sector of the complex.

It localises to the cell inner membrane. It carries out the reaction a quinone + NADH + 5 H(+)(in) = a quinol + NAD(+) + 4 H(+)(out). Its function is as follows. NDH-1 shuttles electrons from NADH, via FMN and iron-sulfur (Fe-S) centers, to quinones in the respiratory chain. The immediate electron acceptor for the enzyme in this species is believed to be ubiquinone. Couples the redox reaction to proton translocation (for every two electrons transferred, four hydrogen ions are translocated across the cytoplasmic membrane), and thus conserves the redox energy in a proton gradient. This subunit may bind ubiquinone. The chain is NADH-quinone oxidoreductase subunit H from Pseudomonas aeruginosa (strain ATCC 15692 / DSM 22644 / CIP 104116 / JCM 14847 / LMG 12228 / 1C / PRS 101 / PAO1).